A 494-amino-acid polypeptide reads, in one-letter code: MVLGTSSGAGKSLMTAALCRVLKRRGETPLPFKGQNMSNNAWVDPGGGEMAYSQALQAWAAGREPECAMNPVLLKPQGDSTSEVIHLGRSVGTCRAEHYYRDWFRPGWAAIRQGLHTLENENPEGRLVLEGAGSPVEVNLQARDLTNLRLAQYLRARCLLVADIERGGVFAQIVGTLALLRPVERPLISGLLINRFRGRRELFDEGRRWLEQHTGIPVLGVMPWLDELFPPEDSLDLLERRGRKRGAELEIAVLKLPSLSNFSDLDPLEAEPTVQLRWVAPGEPLGTPDAVVIPGSKQTLRDLGRLHSSGLGSAVQRFARSGGAVFGVCGGMQMLGQELEDPEGLEGQAAAGGNGAMTGLGLLPLRTRFGGEKALRHRQSSVHWPEHQPTLSVEGFELHRGHTHALEPCSNLCEDPSLGWVARCGDQGGIAAGTYLHGIFDNGPWRRRWLNQLRIRRGLELLSEQQPHHSRQRDALLDRLADAFETHVNLEPLL.

The region spanning 248 to 445 (ELEIAVLKLP…LHGIFDNGPW (198 aa)) is the GATase cobBQ-type domain. The Nucleophile role is filled by cysteine 329. Histidine 437 is an active-site residue.

The protein belongs to the CobB/CobQ family. CobQ subfamily.

Its pathway is cofactor biosynthesis; adenosylcobalamin biosynthesis. Catalyzes amidations at positions B, D, E, and G on adenosylcobyrinic A,C-diamide. NH(2) groups are provided by glutamine, and one molecule of ATP is hydrogenolyzed for each amidation. The sequence is that of Cobyric acid synthase from Synechococcus sp. (strain WH7803).